Reading from the N-terminus, the 165-residue chain is Nucleotide-binding protein Syncc9605_0652 (165 aa).

Belongs to the YajQ family.

Functionally, nucleotide-binding protein. The sequence is that of Nucleotide-binding protein Syncc9605_0652 from Synechococcus sp. (strain CC9605).